The sequence spans 205 residues: Protein N-terminal glutamine amidohydrolase (205 aa).

Catalysis depends on residues cysteine 28, histidine 81, and aspartate 97.

This sequence belongs to the NTAQ1 family. As to quaternary structure, monomer.

It is found in the cytoplasm. The protein localises to the cytosol. The protein resides in the nucleus. The catalysed reaction is N-terminal L-glutaminyl-[protein] + H2O = N-terminal L-glutamyl-[protein] + NH4(+). Its function is as follows. Mediates the side-chain deamidation of N-terminal glutamine residues to glutamate, an important step in N-end rule pathway of protein degradation. Conversion of the resulting N-terminal glutamine to glutamate renders the protein susceptible to arginylation, polyubiquitination and degradation as specified by the N-end rule. Does not act on substrates with internal or C-terminal glutamine and does not act on non-glutamine residues in any position. Does not deaminate acetylated N-terminal glutamine. With the exception of proline, all tested second-position residues on substrate peptides do not greatly influence the activity. In contrast, a proline at position 2, virtually abolishes deamidation of N-terminal glutamine. The protein is Protein N-terminal glutamine amidohydrolase of Homo sapiens (Human).